A 214-amino-acid chain; its full sequence is Adenylate kinase (214 aa).

10–15 (GAGKGT) is an ATP binding site. The interval 30–59 (STGDMFRDHKARGTELGKTVQAIMDAGGLV) is NMP. AMP-binding positions include Thr-31, Arg-36, 57 to 59 (GLV), 85 to 88 (GYPR), and Gln-92. The tract at residues 126 to 163 (GRRSCPKCGAVYHVSANPPRRMGYCDRDDAGLVQRDDD) is LID. An ATP-binding site is contributed by Arg-127. Residues Cys-130 and Cys-133 each coordinate Zn(2+). 136–137 (VY) serves as a coordination point for ATP. Zn(2+) is bound by residues Cys-150 and Asp-153. The AMP site is built by Arg-160 and Arg-171. Gly-199 is a binding site for ATP.

Belongs to the adenylate kinase family. As to quaternary structure, monomer.

It localises to the cytoplasm. It catalyses the reaction AMP + ATP = 2 ADP. Its pathway is purine metabolism; AMP biosynthesis via salvage pathway; AMP from ADP: step 1/1. Functionally, catalyzes the reversible transfer of the terminal phosphate group between ATP and AMP. Plays an important role in cellular energy homeostasis and in adenine nucleotide metabolism. The sequence is that of Adenylate kinase from Anaeromyxobacter sp. (strain Fw109-5).